The chain runs to 335 residues: Zinc-type alcohol dehydrogenase-like protein SAS2087 (335 aa).

Belongs to the zinc-containing alcohol dehydrogenase family. Quinone oxidoreductase subfamily.

The polypeptide is Zinc-type alcohol dehydrogenase-like protein SAS2087 (Staphylococcus aureus (strain MSSA476)).